The sequence spans 475 residues: Ribosomal protein uS12 methylthiotransferase RimO (475 aa).

Residues 5–114 form the MTTase N-terminal domain; sequence RTVRLIRLGC…IAQRLEDVLA (110 aa). [4Fe-4S] cluster-binding residues include Cys-14, Cys-49, Cys-78, Cys-174, Cys-178, and Cys-181. The Radical SAM core domain maps to 160–390; that stretch reads LDDSPVAPLK…AGIAEEVTAD (231 aa). The TRAM domain occupies 393–461; the sequence is RARLGETVDV…GVDFLAAPVT (69 aa).

It belongs to the methylthiotransferase family. RimO subfamily. It depends on [4Fe-4S] cluster as a cofactor.

It is found in the cytoplasm. It carries out the reaction L-aspartate(89)-[ribosomal protein uS12]-hydrogen + (sulfur carrier)-SH + AH2 + 2 S-adenosyl-L-methionine = 3-methylsulfanyl-L-aspartate(89)-[ribosomal protein uS12]-hydrogen + (sulfur carrier)-H + 5'-deoxyadenosine + L-methionine + A + S-adenosyl-L-homocysteine + 2 H(+). In terms of biological role, catalyzes the methylthiolation of an aspartic acid residue of ribosomal protein uS12. This chain is Ribosomal protein uS12 methylthiotransferase RimO, found in Acidothermus cellulolyticus (strain ATCC 43068 / DSM 8971 / 11B).